The sequence spans 391 residues: uncharacterized protein (391 aa).

The helical transmembrane segment at 4–24 (FALIVGIVALAIFSFLYIQLY) threads the bilayer.

It is found in the membrane. This is an uncharacterized protein from Haemophilus influenzae (strain ATCC 51907 / DSM 11121 / KW20 / Rd).